A 206-amino-acid chain; its full sequence is 3-demethoxyubiquinol 3-hydroxylase (206 aa).

Fe cation is bound by residues E55, E85, H88, E137, E169, and H172.

This sequence belongs to the COQ7 family. Fe cation is required as a cofactor.

The protein localises to the cell membrane. The enzyme catalyses a 5-methoxy-2-methyl-3-(all-trans-polyprenyl)benzene-1,4-diol + AH2 + O2 = a 3-demethylubiquinol + A + H2O. Its pathway is cofactor biosynthesis; ubiquinone biosynthesis. Functionally, catalyzes the hydroxylation of 2-nonaprenyl-3-methyl-6-methoxy-1,4-benzoquinol during ubiquinone biosynthesis. The sequence is that of 3-demethoxyubiquinol 3-hydroxylase from Aromatoleum aromaticum (strain DSM 19018 / LMG 30748 / EbN1) (Azoarcus sp. (strain EbN1)).